Consider the following 665-residue polypeptide: DNA mismatch repair protein MutL (665 aa).

2 stretches are compositionally biased toward polar residues: residues 348-361 (LEAT…NGLS) and 407-421 (PSSQ…NSRY). Disordered regions lie at residues 348-370 (LEAT…AEEG) and 385-445 (VHRG…STSA). Residues 426-445 (YSTNAASTNTASNYSHSTSA) are compositionally biased toward low complexity.

It belongs to the DNA mismatch repair MutL/HexB family.

In terms of biological role, this protein is involved in the repair of mismatches in DNA. It is required for dam-dependent methyl-directed DNA mismatch repair. May act as a 'molecular matchmaker', a protein that promotes the formation of a stable complex between two or more DNA-binding proteins in an ATP-dependent manner without itself being part of a final effector complex. The chain is DNA mismatch repair protein MutL from Shewanella denitrificans (strain OS217 / ATCC BAA-1090 / DSM 15013).